A 488-amino-acid chain; its full sequence is IQ domain-containing protein IQM1 (488 aa).

Residues 20–46 (RTNSFKRDDTNRHQNSPKSTMERSLSF) are disordered. Over residues 32–46 (HQNSPKSTMERSLSF) the composition is skewed to polar residues. Positions 106-135 (LDAAATTLQKVYKSYRTRRNLADCAVVVEE) constitute an IQ domain. Disordered regions lie at residues 377–403 (SFKS…EKEE) and 448–472 (SPRV…VRVS). Over residues 388–403 (RKEVSEEVEIPSEKEE) the composition is skewed to basic and acidic residues.

Interacts (via IQ domain) with CAM5. Highly expressed in leaf mesophyll cells. Expressed in roots, rosette and cauline leaves, stems, flowers and siliques.

It localises to the cytoplasm. Its subcellular location is the nucleus. Its function is as follows. Involved in the modulation of stomatal movement. Promotes stomatal opening. May play a role in the regulation of chitin signaling. May be involved in biotic and abiotic stress responses. The sequence is that of IQ domain-containing protein IQM1 from Arabidopsis thaliana (Mouse-ear cress).